Here is a 180-residue protein sequence, read N- to C-terminus: MTVIASELSAAIRSIPDYPKPGIIFRDITTLLGNPRAFRRAVDELVQPYAGTKIDKIAGMEARGFILGGAVAHQLSAGFVPIRKKGKLPHTTVRVAYSLEYGVDEMEMHVDAVQPGEKVILVDDLIATGGTAEGAVKLLRQMGAEIVSACFVIDLPDLGGRKKLEDLGVDVRTLVEFSGH.

Belongs to the purine/pyrimidine phosphoribosyltransferase family. Homodimer.

The protein resides in the cytoplasm. It carries out the reaction AMP + diphosphate = 5-phospho-alpha-D-ribose 1-diphosphate + adenine. It functions in the pathway purine metabolism; AMP biosynthesis via salvage pathway; AMP from adenine: step 1/1. Its function is as follows. Catalyzes a salvage reaction resulting in the formation of AMP, that is energically less costly than de novo synthesis. This Agrobacterium fabrum (strain C58 / ATCC 33970) (Agrobacterium tumefaciens (strain C58)) protein is Adenine phosphoribosyltransferase.